A 388-amino-acid polypeptide reads, in one-letter code: Succinate--CoA ligase [ADP-forming] subunit beta (388 aa).

In terms of domain architecture, ATP-grasp spans 9-244; sequence KQLFARYGLP…QSQEDPREAQ (236 aa). Residues K46, 53–55, E99, T102, and E107 contribute to the ATP site; that span reads GRG. Mg(2+) is bound by residues N199 and D213. Substrate is bound by residues N264 and 321–323; that span reads GIV.

It belongs to the succinate/malate CoA ligase beta subunit family. In terms of assembly, heterotetramer of two alpha and two beta subunits. Requires Mg(2+) as cofactor.

It catalyses the reaction succinate + ATP + CoA = succinyl-CoA + ADP + phosphate. The enzyme catalyses GTP + succinate + CoA = succinyl-CoA + GDP + phosphate. Its pathway is carbohydrate metabolism; tricarboxylic acid cycle; succinate from succinyl-CoA (ligase route): step 1/1. Its function is as follows. Succinyl-CoA synthetase functions in the citric acid cycle (TCA), coupling the hydrolysis of succinyl-CoA to the synthesis of either ATP or GTP and thus represents the only step of substrate-level phosphorylation in the TCA. The beta subunit provides nucleotide specificity of the enzyme and binds the substrate succinate, while the binding sites for coenzyme A and phosphate are found in the alpha subunit. The chain is Succinate--CoA ligase [ADP-forming] subunit beta from Escherichia coli O8 (strain IAI1).